The primary structure comprises 360 residues: Protein Wnt-2 (360 aa).

The N-terminal stretch at 1–25 (MNAPLGGIWLWLPLLLTWLTPEVSS) is a signal peptide. Intrachain disulfides connect C76–C87, C127–C135, C137–C157, C206–C220, C208–C215, C278–C309, C294–C304, C308–C348, C324–C339, C326–C336, and C331–C332. A lipid anchor (O-palmitoleoyl serine; by PORCN) is attached at S212. N295 is a glycosylation site (N-linked (GlcNAc...) asparagine).

Belongs to the Wnt family. Palmitoleoylation is required for efficient binding to frizzled receptors. Depalmitoleoylation leads to Wnt signaling pathway inhibition.

Its subcellular location is the secreted. It localises to the extracellular space. The protein resides in the extracellular matrix. In terms of biological role, ligand for members of the frizzled family of seven transmembrane receptors. Functions in the canonical Wnt signaling pathway that results in activation of transcription factors of the TCF/LEF family. The sequence is that of Protein Wnt-2 (WNT2) from Dasypus novemcinctus (Nine-banded armadillo).